Consider the following 831-residue polypeptide: Probable inactive serine/threonine-protein kinase DDB_G0274613 (831 aa).

The segment at 9-63 (CSICSEEVIDFAAIFSSNKKFGDKACKHNFCVSCLTYLMEYNTRNKKALCCPICR) adopts an RING-type zinc-finger fold. The stretch at 83-348 (RKLSSAQIFL…LEEMKLLYQF (266 aa)) forms a coiled coil. The region spanning 414–787 (QIHKVSIGNG…ANQAAFHKFF (374 aa)) is the Protein kinase domain. The tract at residues 657–703 (NNNNNNNNNNNNNNNNNNNNNNNNNNNNNNNNNNNNNNNNNIESNFN) is disordered.

This sequence belongs to the protein kinase superfamily. CMGC Ser/Thr protein kinase family.

The chain is Probable inactive serine/threonine-protein kinase DDB_G0274613 from Dictyostelium discoideum (Social amoeba).